A 416-amino-acid chain; its full sequence is MNRQSWLLNLSLLKTHPAFRAVFLARFISIVSLGLLGVAVPVQIQMMTHSTWQVGLSVTLTGSAMFVGLMVGGVLADRYERKKVILLARGTCGIGFIGLCLNALLPEPSLLAIYLLGLWDGFFASLGVTALLAATPALVGRENLMQAGAITMLTVRLGSVISPMLGGVLLATGGVAWNYGLAAAGTFITLLPLLSLPALPPPPQPREHPLKSLLAAFRFLLSSPLIGGIALLGGLLTMASAVRVLYPALAINWHMSAAQIGLLYAAIPLGAAVGALTSGQLAHSVRPGLLMLVSTVGSFLAIGVFGLMPVWLLGVICLALFGWLSAISSLLQYTLLQTQTPEAMLGRINGLWTAQNVTGDAIGAALLGGLGAMMTPVASASVSGFGLVIVGLLLMLLLGELRRFRQPPPVPDGAPL.

At Met1–Ala21 the chain is on the cytoplasmic side. A helical membrane pass occupies residues Val22–Val42. Residues Gln43–Gly55 are Periplasmic-facing. A helical membrane pass occupies residues Leu56–Ala76. Over Asp77 to Lys83 the chain is Cytoplasmic. The helical transmembrane segment at Val84–Leu104 threads the bilayer. Residues Leu105–Ser109 are Periplasmic-facing. Residues Leu110–Ala130 traverse the membrane as a helical segment. Residues Leu131–Arg156 are Cytoplasmic-facing. A helical transmembrane segment spans residues Leu157–Trp177. Residue Asn178 is a topological domain, periplasmic. A helical transmembrane segment spans residues Tyr179–Leu199. Over Pro200 to Arg218 the chain is Cytoplasmic. The helical transmembrane segment at Phe219–Ala239 threads the bilayer. Residues Ser240–Ser256 are Periplasmic-facing. A helical membrane pass occupies residues Ala257–Thr277. Residues Ser278–Pro287 lie on the Cytoplasmic side of the membrane. The chain crosses the membrane as a helical span at residues Gly288 to Leu307. At Met308–Leu313 the chain is on the periplasmic side. A helical membrane pass occupies residues Gly314–Leu336. Over Gln337 to Asn356 the chain is Cytoplasmic. The helical transmembrane segment at Val357–Val377 threads the bilayer. Residue Ala378 is a topological domain, periplasmic. A helical transmembrane segment spans residues Ser379 to Gly399. At Glu400–Leu416 the chain is on the cytoplasmic side.

It belongs to the major facilitator superfamily. EntS (TC 2.A.1.38) family.

It localises to the cell inner membrane. Its function is as follows. Component of an export pathway for enterobactin. The polypeptide is Enterobactin exporter EntS (Citrobacter koseri (strain ATCC BAA-895 / CDC 4225-83 / SGSC4696)).